The primary structure comprises 400 residues: Acetate kinase (400 aa).

Residue N9 coordinates Mg(2+). K16 is an ATP binding site. Residue R90 participates in substrate binding. D147 functions as the Proton donor/acceptor in the catalytic mechanism. Residues H207–G211, D282–R284, and G330–N334 contribute to the ATP site. E385 lines the Mg(2+) pocket.

This sequence belongs to the acetokinase family. As to quaternary structure, homodimer. The cofactor is Mg(2+). It depends on Mn(2+) as a cofactor.

The protein resides in the cytoplasm. The enzyme catalyses acetate + ATP = acetyl phosphate + ADP. The protein operates within metabolic intermediate biosynthesis; acetyl-CoA biosynthesis; acetyl-CoA from acetate: step 1/2. Functionally, catalyzes the formation of acetyl phosphate from acetate and ATP. Can also catalyze the reverse reaction. This chain is Acetate kinase, found in Staphylococcus aureus (strain Mu3 / ATCC 700698).